A 398-amino-acid chain; its full sequence is Basic helix-loop-helix neural transcription factor TAP (398 aa).

2 disordered regions span residues 35-59 (ETEAQLSSRRRLDFGTPPTPAIPQP) and 102-144 (RATN…RSRS). Basic residues predominate over residues 127 to 141 (RPKRKYAVGKNRVTR). The bHLH domain occupies 154 to 206 (FRRMKANDRERNRMHNLNDALEKLRVTLPSLPEETKLTKIEILRFAHNYIFAL). Disordered stretches follow at residues 265–333 (AQHQ…QQFS) and 361–398 (QQSSFYSQTPPWKDYPEDQAHVHPVPHQHSYKNFAPQV). The span at 307–333 (HQQQQQPHQPHHLQPNPQQESSPQQFS) shows a compositional bias: low complexity. The span at 361 to 370 (QQSSFYSQTP) shows a compositional bias: polar residues.

As to expression, expressed in neuronal and glial precursors during differentiation. In the peripheral nervous system, expression is exclusively in one of the neurons that innervate each larval chemosensory organ. Expressed at a late stage in the development of one type of adult chemosensory organ, the gustatory bristles of the leg, wing and proboscis. Expressed very early in the development of a second type of chemosensory receptors, the olfactory organs of the antenna.

The protein resides in the nucleus. Functionally, may play a role in the specification of the sugar-sensitive adult gustatory neuron and affect the response to sugar and salt. Regulated by POXN. In Drosophila melanogaster (Fruit fly), this protein is Basic helix-loop-helix neural transcription factor TAP (tap).